The chain runs to 309 residues: Sulfate adenylyltransferase subunit 2 (309 aa).

This sequence belongs to the PAPS reductase family. CysD subfamily. Heterodimer composed of CysD, the smaller subunit, and CysN.

It carries out the reaction sulfate + ATP + H(+) = adenosine 5'-phosphosulfate + diphosphate. It functions in the pathway sulfur metabolism; hydrogen sulfide biosynthesis; sulfite from sulfate: step 1/3. Functionally, with CysN forms the ATP sulfurylase (ATPS) that catalyzes the adenylation of sulfate producing adenosine 5'-phosphosulfate (APS) and diphosphate, the first enzymatic step in sulfur assimilation pathway. APS synthesis involves the formation of a high-energy phosphoric-sulfuric acid anhydride bond driven by GTP hydrolysis by CysN coupled to ATP hydrolysis by CysD. The polypeptide is Sulfate adenylyltransferase subunit 2 (Mycolicibacterium vanbaalenii (strain DSM 7251 / JCM 13017 / BCRC 16820 / KCTC 9966 / NRRL B-24157 / PYR-1) (Mycobacterium vanbaalenii)).